Reading from the N-terminus, the 122-residue chain is Holo-[acyl-carrier-protein] synthase (122 aa).

Mg(2+) is bound by residues aspartate 8 and glutamate 56.

Belongs to the P-Pant transferase superfamily. AcpS family. It depends on Mg(2+) as a cofactor.

The protein localises to the cytoplasm. The enzyme catalyses apo-[ACP] + CoA = holo-[ACP] + adenosine 3',5'-bisphosphate + H(+). Transfers the 4'-phosphopantetheine moiety from coenzyme A to a Ser of acyl-carrier-protein. In Streptomyces griseus subsp. griseus (strain JCM 4626 / CBS 651.72 / NBRC 13350 / KCC S-0626 / ISP 5235), this protein is Holo-[acyl-carrier-protein] synthase.